The primary structure comprises 441 residues: GTPase Der (441 aa).

2 consecutive EngA-type G domains span residues 2–164 (QKVA…PADE) and 173–343 (IRIS…EKWQ). GTP is bound by residues 8–15 (GRPNVGKS), 55–59 (DTGGL), 116–119 (NKID), 179–186 (GRPNVGKS), 226–230 (DTAGI), and 288–291 (NKWD). The 85-residue stretch at 344–428 (SRIPTAELNR…PVRLKWKEKG (85 aa)) folds into the KH-like domain.

Belongs to the TRAFAC class TrmE-Era-EngA-EngB-Septin-like GTPase superfamily. EngA (Der) GTPase family. Associates with the 50S ribosomal subunit.

Functionally, GTPase that plays an essential role in the late steps of ribosome biogenesis. The chain is GTPase Der from Deinococcus geothermalis (strain DSM 11300 / CIP 105573 / AG-3a).